Here is a 115-residue protein sequence, read N- to C-terminus: Large ribosomal subunit protein bL19 (115 aa).

The protein belongs to the bacterial ribosomal protein bL19 family.

Functionally, this protein is located at the 30S-50S ribosomal subunit interface and may play a role in the structure and function of the aminoacyl-tRNA binding site. The polypeptide is Large ribosomal subunit protein bL19 (Buchnera aphidicola subsp. Cinara cedri (strain Cc)).